A 323-amino-acid polypeptide reads, in one-letter code: Phosphoribosylaminoimidazole-succinocarboxamide synthase (323 aa).

It belongs to the SAICAR synthetase family.

It carries out the reaction 5-amino-1-(5-phospho-D-ribosyl)imidazole-4-carboxylate + L-aspartate + ATP = (2S)-2-[5-amino-1-(5-phospho-beta-D-ribosyl)imidazole-4-carboxamido]succinate + ADP + phosphate + 2 H(+). The protein operates within purine metabolism; IMP biosynthesis via de novo pathway; 5-amino-1-(5-phospho-D-ribosyl)imidazole-4-carboxamide from 5-amino-1-(5-phospho-D-ribosyl)imidazole-4-carboxylate: step 1/2. The chain is Phosphoribosylaminoimidazole-succinocarboxamide synthase from Azobacteroides pseudotrichonymphae genomovar. CFP2.